We begin with the raw amino-acid sequence, 453 residues long: 3-phosphoshikimate 1-carboxyvinyltransferase (453 aa).

The span at methionine 1–glycine 12 shows a compositional bias: polar residues. The segment at methionine 1–serine 21 is disordered. Residues lysine 20, serine 21, and arginine 25 each contribute to the 3-phosphoshikimate site. Phosphoenolpyruvate is bound at residue lysine 20. Positions 97 and 125 each coordinate phosphoenolpyruvate. 6 residues coordinate 3-phosphoshikimate: serine 170, serine 171, glutamine 172, serine 198, aspartate 330, and lysine 357. Phosphoenolpyruvate is bound at residue glutamine 172. The active-site Proton acceptor is aspartate 330. Residues arginine 361 and arginine 404 each contribute to the phosphoenolpyruvate site.

Belongs to the EPSP synthase family. Monomer.

It localises to the cytoplasm. The catalysed reaction is 3-phosphoshikimate + phosphoenolpyruvate = 5-O-(1-carboxyvinyl)-3-phosphoshikimate + phosphate. It participates in metabolic intermediate biosynthesis; chorismate biosynthesis. In terms of biological role, catalyzes the transfer of the enolpyruvyl moiety of phosphoenolpyruvate (PEP) to the 5-hydroxyl of shikimate-3-phosphate (S3P) to produce enolpyruvyl shikimate-3-phosphate and inorganic phosphate. This Halorubrum lacusprofundi (strain ATCC 49239 / DSM 5036 / JCM 8891 / ACAM 34) protein is 3-phosphoshikimate 1-carboxyvinyltransferase.